The sequence spans 68 residues: Alpha-conotoxin-like Ca1.2 (68 aa).

Residues 1 to 21 (MGMRMMFTVFLLVVLATTVVS) form the signal peptide. The propeptide occupies 22–48 (FTSDRASEGRNAAAKDKASDLVALTVR). Intrachain disulfides connect C50-C56 and C51-C64. The lacks the Ser-Xaa-Pro motif that is crucial for potent interaction with nAChR stretch occupies residues 52 to 54 (AIR). Y63 carries the sulfotyrosine modification. The residue at position 64 (C64) is a Cysteine amide. Positions 65 to 68 (GGIY) are excised as a propeptide.

Belongs to the conotoxin A superfamily. As to expression, expressed by the venom duct.

It is found in the secreted. Its function is as follows. Alpha-conotoxins act on postsynaptic membranes, they bind to the nicotinic acetylcholine receptors (nAChR) and thus inhibit them. Has possibly a distinct nAChR binding mode from other alpha-conotoxins, due to a different three residue motif (lacks the Ser-Xaa-Pro motif). The polypeptide is Alpha-conotoxin-like Ca1.2 (Conus caracteristicus (Characteristic cone)).